Reading from the N-terminus, the 374-residue chain is Isocitrate dehydrogenase [NAD] catalytic subunit 6, mitochondrial (374 aa).

Residues 1–44 constitute a mitochondrion transit peptide; the sequence is MTMTAFLARRLIGNGSSQILGTSSSSSGPFISVSRAFFSSSTPI. Arg127, Arg137, Arg158, and Asp245 together coordinate substrate. Residues Asp245, Asp269, and Asp273 each coordinate Mg(2+).

It belongs to the isocitrate and isopropylmalate dehydrogenases family. In terms of assembly, heterooligomer of catalytic and regulatory subunits. Requires Mg(2+) as cofactor. The cofactor is Mn(2+). In terms of tissue distribution, ubiquitous. Predominantly expressed in leaves.

It is found in the mitochondrion. It catalyses the reaction D-threo-isocitrate + NAD(+) = 2-oxoglutarate + CO2 + NADH. Functionally, catalytic subunit of the NAD(+)-dependent isocitrate dehydrogenase involved in the oxidative decarboxylation of isocitrate to 2-oxoglutarate. Performs an essential role in the oxidative function of the citric acid cycle. The polypeptide is Isocitrate dehydrogenase [NAD] catalytic subunit 6, mitochondrial (IDH6) (Arabidopsis thaliana (Mouse-ear cress)).